A 499-amino-acid polypeptide reads, in one-letter code: Citrinin biosynthesis cluster MFS transporter mrr1 (499 aa).

The segment at 1 to 29 is disordered; it reads MKEEIDAPVSTDASGTDLENARDQPSGEK. 8 helical membrane passes run 58 to 78, 95 to 115, 124 to 144, 155 to 175, 187 to 207, 215 to 235, 291 to 311, and 327 to 347; these read SLITCIFSTLTIWVTFSSSVF, VMTLGTSLTVLGFTVGPLVWG, LKPLYIGYAIFIIFQVPVAVA, FFLGFFGTSALAIIPGALADF, LFSAATFVGPIFGPIIGGFIV, WTAWITMIPASFFGIIAFLTL, ILVCMTIYISLIYGILYLFFV, and GIAALPFLGILVGVLMGCLLV. N-linked (GlcNAc...) asparagine glycosylation is present at N361. 4 helical membrane passes run 370-390, 395-415, 443-463, and 467-487; these read LPPMIVAAILLPIGLFWFGWT, ISWAPQAIAGAPIGMGILMIW, AVGAAFPLFATAMYHKLGVDW, and LLGFLSIAMIPIPVIFYFYGA.

This sequence belongs to the major facilitator superfamily. CAR1 family.

The protein localises to the membrane. Functionally, MFS transporter; part of the gene cluster that mediates the biosynthesis the mycotoxin citrinin, a hepato-nephrotoxic compound to humans due to inhibition of respiration complex III. In Monascus ruber (Mold), this protein is Citrinin biosynthesis cluster MFS transporter mrr1.